A 352-amino-acid polypeptide reads, in one-letter code: tRNA N6-adenosine threonylcarbamoyltransferase (352 aa).

Fe cation contacts are provided by His115 and His119. Substrate-binding positions include 138–142, Asp171, Gly184, and Asn277; that span reads LVSGG. Position 305 (Asp305) interacts with Fe cation.

Belongs to the KAE1 / TsaD family. The cofactor is Fe(2+).

The protein resides in the cytoplasm. The catalysed reaction is L-threonylcarbamoyladenylate + adenosine(37) in tRNA = N(6)-L-threonylcarbamoyladenosine(37) in tRNA + AMP + H(+). Required for the formation of a threonylcarbamoyl group on adenosine at position 37 (t(6)A37) in tRNAs that read codons beginning with adenine. Is involved in the transfer of the threonylcarbamoyl moiety of threonylcarbamoyl-AMP (TC-AMP) to the N6 group of A37, together with TsaE and TsaB. TsaD likely plays a direct catalytic role in this reaction. This Variovorax paradoxus (strain S110) protein is tRNA N6-adenosine threonylcarbamoyltransferase.